Here is a 503-residue protein sequence, read N- to C-terminus: Probable DNA ligase (503 aa).

E210 provides a ligand contact to ATP. The active-site N6-AMP-lysine intermediate is K212. R217, R232, E261, F296, R367, and K373 together coordinate ATP.

It belongs to the ATP-dependent DNA ligase family. It depends on Mg(2+) as a cofactor.

The catalysed reaction is ATP + (deoxyribonucleotide)n-3'-hydroxyl + 5'-phospho-(deoxyribonucleotide)m = (deoxyribonucleotide)n+m + AMP + diphosphate.. Its function is as follows. DNA ligase that seals nicks in double-stranded DNA during DNA replication, DNA recombination and DNA repair. In Rhodococcus opacus (strain B4), this protein is Probable DNA ligase.